Reading from the N-terminus, the 400-residue chain is MIRRLAALSALSGLATAWLPEVNKKITSTNGTNLFSSSNGKIRGVNLGSQFVFEPWIAEKAWSDMGCGGQKSEFDCVSSLGQAKANGAFASHWGSWITQDDLAEMVSYGLNTIRVPVGYWMREDLVYSDSEHFPQGGLQYLENLCGWASDAGLYIIIDLHGAPGAQTPQNPFTGQYAPTAGFYQDYQFERALKFLEWMTTNIHQNDKFRNVGMLEVVNEPVQDAGKVGSMRSTYYPNAFKRIRAAEQSLNIDRNNYLHIQMMDRLWGSGDPNESLTDTYYAAYDDHRYLKWAGVAVSKDSYISTSCSDQLNSNTPTIVGEWSLSVPDSVQWNSDWAPDSNKDFYKKWFAAQVTAYEKQQGWIFWTWKAQLGDYRWSYQDAVAAGVIPTDLNSLAGLKVCG.

A signal peptide spans 1–17 (MIRRLAALSALSGLATA). Asn30 carries an N-linked (GlcNAc...) asparagine glycan. The active-site Proton donor is Glu219. Asn272 carries N-linked (GlcNAc...) asparagine glycosylation. The Nucleophile role is filled by Glu320.

This sequence belongs to the glycosyl hydrolase 5 (cellulase A) family.

The protein resides in the secreted. It catalyses the reaction Random hydrolysis of (1-&gt;6)-linkages in (1-&gt;6)-beta-D-glucans.. Its function is as follows. Beta-glucanases participate in the metabolism of beta-glucan, the main structural component of the cell wall. Acts on lutean, pustulan and 1,6-oligo-beta-D-glucosides. In Neosartorya fischeri (strain ATCC 1020 / DSM 3700 / CBS 544.65 / FGSC A1164 / JCM 1740 / NRRL 181 / WB 181) (Aspergillus fischerianus), this protein is Probable glucan endo-1,6-beta-glucosidase B (exgB).